The following is a 126-amino-acid chain: Probable V-type proton ATPase subunit G (126 aa).

It belongs to the V-ATPase G subunit family. V-ATPase is a heteromultimeric enzyme made up of two complexes: the ATP-hydrolytic V1 complex and the proton translocation V0 complex. The V1 complex consists of three catalytic AB heterodimers that form a heterohexamer, three peripheral stalks each consisting of EG heterodimers, one central rotor including subunits D and F, and the regulatory subunits C and H. The proton translocation complex V0 consists of the proton transport subunit a, a ring of proteolipid subunits c9c'', rotary subunit d, subunits e and f, and the accessory subunits vah-19/Ac45 and vah-20/PRR. Interacts with ced-1.

Functionally, subunit of the V1 complex of vacuolar(H+)-ATPase (V-ATPase), a multisubunit enzyme composed of a peripheral complex (V1) that hydrolyzes ATP and a membrane integral complex (V0) that translocates protons. V-ATPase is responsible for acidifying and maintaining the pH of intracellular compartments and in some cell types, is targeted to the plasma membrane, where it is responsible for acidifying the extracellular environment. In neurons, required for necrotic cell death by promoting intracellular acidification. In Caenorhabditis elegans, this protein is Probable V-type proton ATPase subunit G.